The primary structure comprises 222 residues: Peptide methionine sulfoxide reductase MsrA (222 aa).

The active site involves Cys-55.

The protein belongs to the MsrA Met sulfoxide reductase family.

It catalyses the reaction L-methionyl-[protein] + [thioredoxin]-disulfide + H2O = L-methionyl-(S)-S-oxide-[protein] + [thioredoxin]-dithiol. The catalysed reaction is [thioredoxin]-disulfide + L-methionine + H2O = L-methionine (S)-S-oxide + [thioredoxin]-dithiol. In terms of biological role, has an important function as a repair enzyme for proteins that have been inactivated by oxidation. Catalyzes the reversible oxidation-reduction of methionine sulfoxide in proteins to methionine. In Streptomyces griseus subsp. griseus (strain JCM 4626 / CBS 651.72 / NBRC 13350 / KCC S-0626 / ISP 5235), this protein is Peptide methionine sulfoxide reductase MsrA.